The chain runs to 147 residues: Hemoglobin subunit gamma (147 aa).

A Globin domain is found at histidine 3–histidine 147. Heme b contacts are provided by histidine 64 and histidine 93.

Belongs to the globin family. In terms of assembly, heterotetramer of two alpha chains and two gamma chains in fetal hemoglobin (Hb F). In terms of tissue distribution, red blood cells.

Gamma chains make up the fetal hemoglobin F, in combination with alpha chains. The sequence is that of Hemoglobin subunit gamma (HBG) from Elephas maximus (Indian elephant).